Consider the following 324-residue polypeptide: Beta-ketoacyl-[acyl-carrier-protein] synthase III (324 aa).

Residues Cys-114 and His-246 contribute to the active site. Positions 247–251 (QANLR) are ACP-binding. The active site involves Asn-276.

It belongs to the thiolase-like superfamily. FabH family. In terms of assembly, homodimer.

The protein resides in the cytoplasm. It carries out the reaction malonyl-[ACP] + acetyl-CoA + H(+) = 3-oxobutanoyl-[ACP] + CO2 + CoA. Its pathway is lipid metabolism; fatty acid biosynthesis. Catalyzes the condensation reaction of fatty acid synthesis by the addition to an acyl acceptor of two carbons from malonyl-ACP. Catalyzes the first condensation reaction which initiates fatty acid synthesis and may therefore play a role in governing the total rate of fatty acid production. Possesses both acetoacetyl-ACP synthase and acetyl transacylase activities. Its substrate specificity determines the biosynthesis of branched-chain and/or straight-chain of fatty acids. The sequence is that of Beta-ketoacyl-[acyl-carrier-protein] synthase III from Campylobacter jejuni subsp. doylei (strain ATCC BAA-1458 / RM4099 / 269.97).